The following is a 556-amino-acid chain: Urocanate hydratase (556 aa).

Residues 52–53 (GG), glutamine 130, 176–178 (GMG), glutamate 196, arginine 201, 242–243 (NA), 263–267 (QTSAH), 273–274 (YL), and tyrosine 322 each bind NAD(+). Cysteine 410 is an active-site residue. Glycine 492 is an NAD(+) binding site.

Belongs to the urocanase family. The cofactor is NAD(+).

Its subcellular location is the cytoplasm. The catalysed reaction is 4-imidazolone-5-propanoate = trans-urocanate + H2O. Its pathway is amino-acid degradation; L-histidine degradation into L-glutamate; N-formimidoyl-L-glutamate from L-histidine: step 2/3. In terms of biological role, catalyzes the conversion of urocanate to 4-imidazolone-5-propionate. The sequence is that of Urocanate hydratase from Shewanella frigidimarina (strain NCIMB 400).